The chain runs to 102 residues: Small ribosomal subunit protein uS10 (102 aa).

The protein belongs to the universal ribosomal protein uS10 family. Part of the 30S ribosomal subunit.

In terms of biological role, involved in the binding of tRNA to the ribosomes. This chain is Small ribosomal subunit protein uS10, found in Methanobrevibacter smithii (strain ATCC 35061 / DSM 861 / OCM 144 / PS).